Here is a 244-residue protein sequence, read N- to C-terminus: Small ribosomal subunit protein eS4 (244 aa).

In terms of domain architecture, S4 RNA-binding spans 43 to 106 (LPLLLVVRDV…DETYLVLFDE (64 aa)).

The protein belongs to the eukaryotic ribosomal protein eS4 family.

This chain is Small ribosomal subunit protein eS4, found in Methanococcus maripaludis (strain DSM 14266 / JCM 13030 / NBRC 101832 / S2 / LL).